Here is a 327-residue protein sequence, read N- to C-terminus: Malate dehydrogenase (327 aa).

11-17 (GAAGQIG) is an NAD(+) binding site. Residues Arg92 and Arg98 each coordinate substrate. NAD(+) is bound by residues Asn105, Gln112, and 129–131 (VGN). Residues Asn131 and Arg162 each coordinate substrate. The active-site Proton acceptor is the His187.

The protein belongs to the LDH/MDH superfamily. MDH type 2 family.

The catalysed reaction is (S)-malate + NAD(+) = oxaloacetate + NADH + H(+). Catalyzes the reversible oxidation of malate to oxaloacetate. In Thermus thermophilus (strain ATCC BAA-163 / DSM 7039 / HB27), this protein is Malate dehydrogenase.